The sequence spans 613 residues: Glutamyl-tRNA(Gln) amidotransferase subunit E (613 aa).

Belongs to the GatB/GatE family. GatE subfamily. In terms of assembly, heterodimer of GatD and GatE.

The enzyme catalyses L-glutamyl-tRNA(Gln) + L-glutamine + ATP + H2O = L-glutaminyl-tRNA(Gln) + L-glutamate + ADP + phosphate + H(+). Allows the formation of correctly charged Gln-tRNA(Gln) through the transamidation of misacylated Glu-tRNA(Gln) in organisms which lack glutaminyl-tRNA synthetase. The reaction takes place in the presence of glutamine and ATP through an activated gamma-phospho-Glu-tRNA(Gln). The GatDE system is specific for glutamate and does not act on aspartate. The protein is Glutamyl-tRNA(Gln) amidotransferase subunit E of Archaeoglobus fulgidus (strain ATCC 49558 / DSM 4304 / JCM 9628 / NBRC 100126 / VC-16).